The sequence spans 346 residues: Endosome-associated-trafficking regulator 1 (346 aa).

A compositionally biased stretch (polar residues) spans 46-67 (FVSSNSKRAFSKDSNQSTTQFR). Disordered stretches follow at residues 46–77 (FVSS…DGNL), 93–129 (LQED…GDES), and 153–173 (SPPA…SDSE). Positions 170–317 (SDSEEGLRLL…SGAQSSIKQL (148 aa)) form a coiled coil.

Belongs to the ENTR1 family.

It localises to the cytoplasm. Its subcellular location is the early endosome. It is found in the endosome. The protein localises to the recycling endosome. The protein resides in the midbody. It localises to the cytoskeleton. Its subcellular location is the microtubule organizing center. It is found in the centrosome. The protein localises to the cilium basal body. In terms of biological role, endosome-associated protein that plays a role in membrane receptor sorting, cytokinesis and ciliogenesis. The sequence is that of Endosome-associated-trafficking regulator 1 from Xenopus tropicalis (Western clawed frog).